The chain runs to 312 residues: Ribosomal RNA small subunit methyltransferase H (312 aa).

S-adenosyl-L-methionine is bound by residues glycine 35–histidine 37, aspartate 55, aspartate 101, and glutamine 108. The segment at alanine 285 to valine 306 is disordered. The span at lysine 287–arginine 298 shows a compositional bias: basic and acidic residues.

Belongs to the methyltransferase superfamily. RsmH family.

The protein resides in the cytoplasm. The enzyme catalyses cytidine(1402) in 16S rRNA + S-adenosyl-L-methionine = N(4)-methylcytidine(1402) in 16S rRNA + S-adenosyl-L-homocysteine + H(+). In terms of biological role, specifically methylates the N4 position of cytidine in position 1402 (C1402) of 16S rRNA. This is Ribosomal RNA small subunit methyltransferase H from Aeromonas salmonicida (strain A449).